The chain runs to 499 residues: Lysosomal Pro-X carboxypeptidase (499 aa).

A signal peptide spans methionine 1 to alanine 21. The propeptide occupies asparagine 22–threonine 47. N-linked (GlcNAc...) asparagine glycosylation occurs at asparagine 103. The active-site Charge relay system is serine 181. The segment at histidine 196–tyrosine 337 is SKS domain. 4 disulfides stabilise this stretch: cysteine 217–cysteine 375, cysteine 235–cysteine 313, cysteine 266–cysteine 346, and cysteine 367–cysteine 397. Asparagine 234 carries an N-linked (GlcNAc...) asparagine glycan. N-linked (GlcNAc...) asparagine glycosylation is found at asparagine 339 and asparagine 348. Asparagine 418 carries N-linked (GlcNAc...) asparagine glycosylation. Catalysis depends on charge relay system residues aspartate 433 and histidine 458.

This sequence belongs to the peptidase S28 family. In terms of assembly, homodimer.

It is found in the lysosome. The enzyme catalyses Cleavage of a -Pro-|-Xaa bond to release a C-terminal amino acid.. Cleaves C-terminal amino acids linked to proline in peptides such as angiotensin II, III and des-Arg9-bradykinin. This cleavage occurs at acidic pH, but enzymatic activity is retained with some substrates at neutral pH. The sequence is that of Lysosomal Pro-X carboxypeptidase (PRCP) from Bos taurus (Bovine).